Here is an 866-residue protein sequence, read N- to C-terminus: MYRTHRQHSLLSSGGVPSFIGGLVVFVSAAFNAQAETWFDPAFFKDDPSMVADLSRFEKGQKITPGVYRVDIVLNQTIVDTRNVNFVEITPEKGIAACLTTESLDAMGVNTDAFPAFKQLDKQACVPLAEIIPDASVTFNVNKLRLEISVPQIAIKSNARGYVPPERWDEGINALLLGYSFSGANSIHSSADSDSGDSYFLNLNSGVNLGPWRLRNNSTWSRSSGQTAEWKNLSSYLQRAVIPLKGELTVGDDYTAGDFFDSVSFRGVQLASDDNMLPDSLKGFAPVVRGIAKSNAQITIKQNGYTIYQTYVSPGAFEISDLYSTSSSGDLLVEIKEADGSVNSYSVPFSSVPLLQRQGRIKYAVTLAKYRTNSNEQQESKFAQATLQWGGPWGTTWYGGGQYAEYYRAAMFGLGFNLGDFGAISFDATQAKSTLADQSEHKGQSYRFLYAKTLNHLGTNFQLMGYRYSTSGFYTLSDTMYKHMDGYEFNDGDDEDTPMWSRYYNLFYTKRGKLQVNISQQLGEYGSFYLSGSQQTYWHTDQQDRLLQFGYNTQIKDLSLGISWNYSKSRGQPDADQVFALNFSLPLNLLLPRSNDSYTRKKNYAWMTSNTSIDNEGHTTQNLGLTETLLDDGNLSYSVQQGYNSEGKTANGSASMDYKGAFADARVGYNYSDNGSQQQLNYALSGSLVAHSQGITLGQSLGETNVLIAAPGAENTRVANSTGLKTDWRGYTVVPYATSYRENRIALDAASLKRNVDLENAVVNVVPTKGALVLAEFNAHAGARVLMKTSKQGIPLRFGAIATLDGVQANSGIIDDDGSLYMAGLPAKGTISVRWGEAPDQICHINYELTEQQINSAITRMDAICR.

An N-terminal signal peptide occupies residues 1 to 35 (MYRTHRQHSLLSSGGVPSFIGGLVVFVSAAFNAQA).

Belongs to the fimbrial export usher family.

It localises to the cell outer membrane. In terms of biological role, part of the elfADCG-ycbUVF fimbrial operon, which promotes adhesion of bacteria to different abiotic surfaces. Could be involved in the export and assembly of the ElfA fimbrial subunits across the outer membrane. This Escherichia coli (strain K12) protein is Probable outer membrane usher protein ElfC (elfC).